The chain runs to 1072 residues: RIMS-binding protein 2 (1072 aa).

The 68-residue stretch at 181 to 248 (GKVHLCVARY…PSNFVDFIQD (68 aa)) folds into the SH3 1 domain. 3 consecutive Fibronectin type-III domains span residues 311–404 (VPYP…GKDV), 407–489 (APSQ…KKEA), and 503–604 (PPQD…VPPA). Disordered stretches follow at residues 597-681 (PDLL…APVS) and 713-800 (SAGQ…TSHN). Over residues 599–615 (LLVPPAPHPRTAPPPKP) the composition is skewed to pro residues. Positions 620 to 635 (MDTKDQHLGPHVKVDE) are enriched in basic and acidic residues. The span at 660–670 (GPGRRSPSPSR) shows a compositional bias: low complexity. Phosphoserine is present on residues serine 720 and serine 728. Basic and acidic residues-rich tracts occupy residues 730–743 (EVKR…DFLK) and 754–765 (CHGDEYHTESSR). Residues 771-781 (DIMEEDEEELY) show a composition bias toward acidic residues. Phosphoserine is present on residues serine 852 and serine 859. The residue at position 861 (threonine 861) is a Phosphothreonine. SH3 domains follow at residues 868–936 (LPAR…EIHA) and 972–1039 (VPTR…EVPD). The interval 1044–1072 (HLSDAPPHYSHDPPMRSKAKRKKSVHFTP) is disordered. Residues 1060 to 1072 (SKAKRKKSVHFTP) are compositionally biased toward basic residues.

This sequence belongs to the RIMBP family. In terms of assembly, interacts with RIMS1, RIMS2, CACNA1D and CACNA1B, and potentially with other Ca(2+) channel alpha-1 isoforms.

Its subcellular location is the cell membrane. The protein localises to the synapse. In terms of biological role, plays a role in the synaptic transmission as bifunctional linker that interacts simultaneously with RIMS1, RIMS2, CACNA1D and CACNA1B. In Mus musculus (Mouse), this protein is RIMS-binding protein 2 (Rimbp2).